A 178-amino-acid polypeptide reads, in one-letter code: uncharacterized protein (178 aa).

A helical transmembrane segment spans residues 7–27 (LAIGTAILLIGMAYWTVSIVE).

It localises to the membrane. This is an uncharacterized protein from Methanocaldococcus jannaschii (strain ATCC 43067 / DSM 2661 / JAL-1 / JCM 10045 / NBRC 100440) (Methanococcus jannaschii).